The chain runs to 307 residues: Glycine--tRNA ligase alpha subunit (307 aa).

Belongs to the class-II aminoacyl-tRNA synthetase family. In terms of assembly, tetramer of two alpha and two beta subunits.

It localises to the cytoplasm. It carries out the reaction tRNA(Gly) + glycine + ATP = glycyl-tRNA(Gly) + AMP + diphosphate. In Aeromonas hydrophila subsp. hydrophila (strain ATCC 7966 / DSM 30187 / BCRC 13018 / CCUG 14551 / JCM 1027 / KCTC 2358 / NCIMB 9240 / NCTC 8049), this protein is Glycine--tRNA ligase alpha subunit.